The primary structure comprises 92 residues: Acylphosphatase (92 aa).

Residues 5 to 92 (QVQLFVRGRV…GDFFDFRITD (88 aa)) form the Acylphosphatase-like domain. Catalysis depends on residues Arg-20 and Asn-38.

Belongs to the acylphosphatase family.

It carries out the reaction an acyl phosphate + H2O = a carboxylate + phosphate + H(+). The sequence is that of Acylphosphatase (acyP) from Sorangium cellulosum (strain So ce56) (Polyangium cellulosum (strain So ce56)).